The following is a 161-amino-acid chain: RNA pyrophosphohydrolase (161 aa).

One can recognise a Nudix hydrolase domain in the interval 12–154 (PYRPGVGMMI…KRKLYQAVVK (143 aa)). A Nudix box motif is present at residues 46–67 (GGIVPGETPSIAAMREMLEEIG).

It belongs to the Nudix hydrolase family. RppH subfamily. Requires a divalent metal cation as cofactor.

Functionally, accelerates the degradation of transcripts by removing pyrophosphate from the 5'-end of triphosphorylated RNA, leading to a more labile monophosphorylated state that can stimulate subsequent ribonuclease cleavage. This Rickettsia typhi (strain ATCC VR-144 / Wilmington) protein is RNA pyrophosphohydrolase.